A 252-amino-acid chain; its full sequence is Chitooligosaccharide deacetylase (252 aa).

Residues His-61 and His-125 each contribute to the Mg(2+) site.

The protein belongs to the YdjC deacetylase family. ChbG subfamily. Homodimer. Mg(2+) serves as cofactor.

The protein resides in the cytoplasm. The catalysed reaction is N,N'-diacetylchitobiose + H2O = N-acetyl-beta-D-glucosaminyl-(1-&gt;4)-D-glucosamine + acetate. It carries out the reaction diacetylchitobiose-6'-phosphate + H2O = N'-monoacetylchitobiose-6'-phosphate + acetate. It participates in glycan degradation; chitin degradation. Functionally, involved in the degradation of chitin. ChbG is essential for growth on the acetylated chitooligosaccharides chitobiose and chitotriose but is dispensable for growth on cellobiose and chitosan dimer, the deacetylated form of chitobiose. Deacetylation of chitobiose-6-P and chitotriose-6-P is necessary for both the activation of the chb promoter by the regulatory protein ChbR and the hydrolysis of phosphorylated beta-glucosides by the phospho-beta-glucosidase ChbF. Catalyzes the removal of only one acetyl group from chitobiose-6-P to yield monoacetylchitobiose-6-P, the inducer of ChbR and the substrate of ChbF. The chain is Chitooligosaccharide deacetylase from Salmonella paratyphi C (strain RKS4594).